The chain runs to 426 residues: Probable serine/threonine-protein kinase PBL3 (426 aa).

Residues 1 to 42 (MGNCLDSSAKVDSSSHSPHANSASLSSRVSSKTSRSTVPSSL) form a disordered region. Gly2 carries the N-myristoyl glycine lipid modification. The S-palmitoyl cysteine moiety is linked to residue Cys4. Low complexity predominate over residues 7 to 42 (SSAKVDSSSHSPHANSASLSSRVSSKTSRSTVPSSL). Residue Thr72 is modified to Phosphothreonine. Residues 83–366 (FRPDSLLGEG…SEVLAKLDQL (284 aa)) enclose the Protein kinase domain. ATP contacts are provided by residues 89–97 (LGEGGFGYV) and Lys121. Tyr166 is subject to Phosphotyrosine. The active-site Proton acceptor is Asp216. At Ser250 the chain carries Phosphoserine. Phosphothreonine occurs at positions 251 and 256. At Tyr264 the chain carries Phosphotyrosine. A compositionally biased stretch (polar residues) spans 367–394 (ESTKPGTGVGNRQAQIDSPRGSNGSIVQ). Residues 367–426 (ESTKPGTGVGNRQAQIDSPRGSNGSIVQKSPRRYSYDRPLLHITPGASPLPTHNHSPRVR) are disordered.

The protein belongs to the protein kinase superfamily. Ser/Thr protein kinase family. Interacts with the Xanthomonas campestris effector XopAC/AvrAC. In terms of tissue distribution, strongly expressed in leaves, moderately in flowers, and barely in roots.

Its subcellular location is the cell membrane. It localises to the nucleus. The enzyme catalyses L-seryl-[protein] + ATP = O-phospho-L-seryl-[protein] + ADP + H(+). It carries out the reaction L-threonyl-[protein] + ATP = O-phospho-L-threonyl-[protein] + ADP + H(+). Its function is as follows. May be involved in plant defense signaling. The sequence is that of Probable serine/threonine-protein kinase PBL3 from Arabidopsis thaliana (Mouse-ear cress).